Reading from the N-terminus, the 593-residue chain is Vicilin Jug r 2.0101 (593 aa).

2 stretches are compositionally biased toward basic and acidic residues: residues Leu-46–Tyr-76 and Arg-97–Asp-118. The segment at Leu-46 to Tyr-123 is disordered. IgE-binding regions lie at residues Asp-49–Arg-58, Tyr-76–Arg-85, and Gln-101–Arg-110. Residues Gln-140–Arg-149 form an igE-binding. Involved in cross-reactivity with peanut allergen Ara h 2; able to inhibit binding of IgE from a peanut-allergic patient to Ara h 2 region. Basic and acidic residues predominate over residues Gln-150–Arg-178. The disordered stretch occupies residues Gln-150–Phe-184. T-cell epitope; recognized by the HLA-DRB1-restricted CD4(+) T-cells stretches follow at residues Glu-175 to His-193 and Phe-206 to Asp-225. Tyr-182 serves as a coordination point for Cu cation. 2 Cupin type-1 domains span residues Gln-187–Glu-341 and Ile-386–Glu-556. Asn-229 carries N-linked (GlcNAc...) asparagine glycosylation. T-cell epitope; recognized by the HLA-DRB1-restricted CD4(+) T-cells stretches follow at residues Thr-246 to Leu-265, Pro-302 to Leu-321, Gln-318 to Arg-337, Ser-382 to Gln-401, Gln-414 to Pro-433, and Lys-438 to Pro-457. Residues Cys-456 and His-458 each contribute to the Cu cation site. The interval Ser-463–Arg-470 is igE-binding. The T-cell epitope; recognized by the HLA-DRB1-restricted CD4(+) T-cells stretch occupies residues Thr-478–Pro-497. Position 500 (His-500) interacts with Cu cation. Positions Leu-529–Glu-556 form a coiled coil. An igE-binding region spans residues Arg-541–Ile-555. T-cell epitope; recognized by the HLA-DRB1-restricted CD4(+) T-cells regions lie at residues Glu-542–Ser-561 and Ile-558–Gly-577.

The protein belongs to the 7S seed storage protein family. Post-translationally, proteolytically cleaved. In terms of tissue distribution, expressed in seed (at protein level).

Functionally, seed storage protein. The sequence is that of Vicilin Jug r 2.0101 from Juglans regia (English walnut).